A 258-amino-acid polypeptide reads, in one-letter code: UPF0246 protein Sfri_2896 (258 aa).

The protein belongs to the UPF0246 family.

This Shewanella frigidimarina (strain NCIMB 400) protein is UPF0246 protein Sfri_2896.